Here is a 270-residue protein sequence, read N- to C-terminus: Acyl-[acyl-carrier-protein]--UDP-N-acetylglucosamine O-acyltransferase (270 aa).

The protein belongs to the transferase hexapeptide repeat family. LpxA subfamily. In terms of assembly, homotrimer.

The protein localises to the cytoplasm. The catalysed reaction is a (3R)-hydroxyacyl-[ACP] + UDP-N-acetyl-alpha-D-glucosamine = a UDP-3-O-[(3R)-3-hydroxyacyl]-N-acetyl-alpha-D-glucosamine + holo-[ACP]. The protein operates within glycolipid biosynthesis; lipid IV(A) biosynthesis; lipid IV(A) from (3R)-3-hydroxytetradecanoyl-[acyl-carrier-protein] and UDP-N-acetyl-alpha-D-glucosamine: step 1/6. In terms of biological role, involved in the biosynthesis of lipid A, a phosphorylated glycolipid that anchors the lipopolysaccharide to the outer membrane of the cell. In Helicobacter acinonychis (strain Sheeba), this protein is Acyl-[acyl-carrier-protein]--UDP-N-acetylglucosamine O-acyltransferase.